We begin with the raw amino-acid sequence, 353 residues long: Photosystem II protein D1 (353 aa).

Position 2 is an N-acetylthreonine (Thr2). Phosphothreonine is present on Thr2. 3 helical membrane-spanning segments follow: residues 29–46 (YIGW…TATS), 118–133 (HFLL…EWEL), and 142–156 (WIAV…AATA). His118 lines the chlorophyll a pocket. Tyr126 serves as a coordination point for pheophytin a. 2 residues coordinate [CaMn4O5] cluster: Asp170 and Glu189. Residues 197 to 218 (FHMLGVAGVFGGSLFSAMHGSL) traverse the membrane as a helical segment. A chlorophyll a-binding site is contributed by His198. A quinone-binding positions include His215 and 264-265 (SF). His215 serves as a coordination point for Fe cation. Residue His272 coordinates Fe cation. The helical transmembrane segment at 274–288 (FLAAWPVVGIWFTAL) threads the bilayer. His332, Glu333, Asp342, and Ala344 together coordinate [CaMn4O5] cluster. Positions 345-353 (AVEVPSING) are excised as a propeptide.

This sequence belongs to the reaction center PufL/M/PsbA/D family. In terms of assembly, PSII is composed of 1 copy each of membrane proteins PsbA, PsbB, PsbC, PsbD, PsbE, PsbF, PsbH, PsbI, PsbJ, PsbK, PsbL, PsbM, PsbT, PsbX, PsbY, PsbZ, Psb30/Ycf12, at least 3 peripheral proteins of the oxygen-evolving complex and a large number of cofactors. It forms dimeric complexes. The D1/D2 heterodimer binds P680, chlorophylls that are the primary electron donor of PSII, and subsequent electron acceptors. It shares a non-heme iron and each subunit binds pheophytin, quinone, additional chlorophylls, carotenoids and lipids. D1 provides most of the ligands for the Mn4-Ca-O5 cluster of the oxygen-evolving complex (OEC). There is also a Cl(-1) ion associated with D1 and D2, which is required for oxygen evolution. The PSII complex binds additional chlorophylls, carotenoids and specific lipids. serves as cofactor. In terms of processing, tyr-161 forms a radical intermediate that is referred to as redox-active TyrZ, YZ or Y-Z. C-terminally processed by CTPA; processing is essential to allow assembly of the oxygen-evolving complex and thus photosynthetic growth.

It is found in the plastid. Its subcellular location is the chloroplast thylakoid membrane. The catalysed reaction is 2 a plastoquinone + 4 hnu + 2 H2O = 2 a plastoquinol + O2. In terms of biological role, photosystem II (PSII) is a light-driven water:plastoquinone oxidoreductase that uses light energy to abstract electrons from H(2)O, generating O(2) and a proton gradient subsequently used for ATP formation. It consists of a core antenna complex that captures photons, and an electron transfer chain that converts photonic excitation into a charge separation. The D1/D2 (PsbA/PsbD) reaction center heterodimer binds P680, the primary electron donor of PSII as well as several subsequent electron acceptors. This chain is Photosystem II protein D1, found in Triticum aestivum (Wheat).